Consider the following 507-residue polypeptide: Maturase K (507 aa).

Belongs to the intron maturase 2 family. MatK subfamily.

It is found in the plastid. It localises to the chloroplast. Usually encoded in the trnK tRNA gene intron. Probably assists in splicing its own and other chloroplast group II introns. The protein is Maturase K of Lyonia ferruginea (Rusty staggerbush).